The primary structure comprises 361 residues: tRNA/tmRNA (uracil-C(5))-methyltransferase (361 aa).

S-adenosyl-L-methionine contacts are provided by Q185, Y213, N218, E234, and D294. C319 acts as the Nucleophile in catalysis. The active-site Proton acceptor is E353.

It belongs to the class I-like SAM-binding methyltransferase superfamily. RNA M5U methyltransferase family. TrmA subfamily.

The enzyme catalyses uridine(54) in tRNA + S-adenosyl-L-methionine = 5-methyluridine(54) in tRNA + S-adenosyl-L-homocysteine + H(+). It catalyses the reaction uridine(341) in tmRNA + S-adenosyl-L-methionine = 5-methyluridine(341) in tmRNA + S-adenosyl-L-homocysteine + H(+). Functionally, dual-specificity methyltransferase that catalyzes the formation of 5-methyluridine at position 54 (m5U54) in all tRNAs, and that of position 341 (m5U341) in tmRNA (transfer-mRNA). The sequence is that of tRNA/tmRNA (uracil-C(5))-methyltransferase from Pseudomonas putida (strain GB-1).